Consider the following 570-residue polypeptide: Probable metalloreductase AIM14 (570 aa).

Helical transmembrane passes span 21-41 (IKYG…LALL), 70-90 (AIHL…HYSL), 101-118 (LGRL…LTLR), 142-162 (IITV…AIDD), 177-197 (FVGF…IGPM), 204-224 (LFYI…PIHS), and 230-250 (FPFL…RIVF). A Ferric oxidoreductase domain is found at 101–219 (LGRLSYALIP…NLVNVAFILL (119 aa)). Residues 250-388 (FAKSLMILNK…GGSGISFALP (139 aa)) form the FAD-binding FR-type domain. Residues 481-505 (SNFNSENADSNDNTPETSHSPTKEN) show a composition bias toward polar residues. The segment at 481–507 (SNFNSENADSNDNTPETSHSPTKENGS) is disordered.

The protein belongs to the ferric reductase (FRE) family. AIM14 subfamily. As to quaternary structure, interacts with ribosomes.

Its subcellular location is the membrane. In terms of biological role, probable cell surface metalloreductase. May be involved in iron or copper homeostasis. The chain is Probable metalloreductase AIM14 (AIM14) from Saccharomyces cerevisiae (strain YJM789) (Baker's yeast).